The sequence spans 1111 residues: Lon protease homolog, mitochondrial (1111 aa).

A mitochondrion-targeting transit peptide spans 1–21 (MLRSSRSRLVTRNILLRQFKN). Disordered stretches follow at residues 85–177 (IQLK…AKQP) and 288–311 (PPTS…ENNE). Residues 88–125 (KQDDKGKDIDQPESENRKKEEEQVPTEEKDNDTAKESE) show a composition bias toward basic and acidic residues. Positions 126–135 (TSQQRDSVAE) are enriched in polar residues. Gly residues predominate over residues 145–167 (GASGNGESSGNGSGDDGNNGSGN). A Lon N-terminal domain is found at 185–450 (VMALPISRRP…KALTVLKKEL (266 aa)). Residues 294–306 (NLKDESDVSKSEG) are compositionally biased toward basic and acidic residues. 602 to 609 (GPPGVGKT) contributes to the ATP binding site. 2 stretches are compositionally biased toward basic and acidic residues: residues 819–835 (ENEE…KQSE) and 853–865 (ELIK…DNKG). The disordered stretch occupies residues 819–866 (ENEEVKDQKDIKVKQSENKSSAEASTVESTTEENELIKTQKSHDNKGS). One can recognise a Lon proteolytic domain in the interval 899–1085 (STPPGVVMGL…EDVFQRLFGD (187 aa)). Active-site residues include serine 991 and lysine 1034.

It belongs to the peptidase S16 family. In terms of assembly, homohexamer or homoheptamer. Organized in a ring with a central cavity.

It localises to the mitochondrion matrix. The enzyme catalyses Hydrolysis of proteins in presence of ATP.. Functionally, ATP-dependent serine protease that mediates the selective degradation of misfolded, unassembled or oxidatively damaged polypeptides as well as certain short-lived regulatory proteins in the mitochondrial matrix. May also have a chaperone function in the assembly of inner membrane protein complexes. Participates in the regulation of mitochondrial gene expression and in the maintenance of the integrity of the mitochondrial genome. Binds to mitochondrial DNA in a site-specific manner. The chain is Lon protease homolog, mitochondrial from Kluyveromyces lactis (strain ATCC 8585 / CBS 2359 / DSM 70799 / NBRC 1267 / NRRL Y-1140 / WM37) (Yeast).